A 119-amino-acid polypeptide reads, in one-letter code: Large ribosomal subunit protein uL24 (119 aa).

Belongs to the universal ribosomal protein uL24 family. In terms of assembly, part of the 50S ribosomal subunit.

Its function is as follows. One of two assembly initiator proteins, it binds directly to the 5'-end of the 23S rRNA, where it nucleates assembly of the 50S subunit. Located at the polypeptide exit tunnel on the outside of the subunit. The sequence is that of Large ribosomal subunit protein uL24 from Methanosarcina acetivorans (strain ATCC 35395 / DSM 2834 / JCM 12185 / C2A).